The chain runs to 205 residues: Thymidine kinase (205 aa).

ATP contacts are provided by residues 9 to 16 and 87 to 90; these read SAMNAGKS and DESQ. E88 acts as the Proton acceptor in catalysis. Zn(2+) is bound by residues C145, C147, C182, and H185.

It belongs to the thymidine kinase family. Homotetramer.

It localises to the cytoplasm. The enzyme catalyses thymidine + ATP = dTMP + ADP + H(+). The sequence is that of Thymidine kinase from Salmonella paratyphi A (strain ATCC 9150 / SARB42).